The primary structure comprises 391 residues: Putative 12-oxophytodienoate reductase 6 (391 aa).

Residues 42–44, Ala75, and Gln117 each bind FMN; that span reads PMT. Residue 189–192 participates in substrate binding; that stretch reads HGAN. Residue Tyr194 is the Proton donor of the active site. Arg241 contacts FMN. Arg282 contacts substrate. FMN is bound by residues Gly312 and 333–334; that span reads GR. The interval 372–391 is disordered; that stretch reads YPFLDEHHHDDDDDSNAPSA. Residues 382–391 are compositionally biased toward acidic residues; sequence DDDDSNAPSA.

It belongs to the NADH:flavin oxidoreductase/NADH oxidase family. FMN serves as cofactor.

Functionally, putative oxophytodienoate reductase that may be involved in the biosynthesis or metabolism of oxylipin signaling molecules. The sequence is that of Putative 12-oxophytodienoate reductase 6 (OPR6) from Oryza sativa subsp. japonica (Rice).